Reading from the N-terminus, the 756-residue chain is Lysyl oxidase homolog 4 (756 aa).

The signal sequence occupies residues 1-24; sequence MAWSPPATLFLFLLLLGQPPPSRP. 4 SRCR domains span residues 32–133, 159–287, 311–411, and 421–529; these read LRLV…VICH, VRLK…VSCV, VRLR…VRCN, and VRLA…VSCM. Intrachain disulfides connect Cys58-Cys122, Cys71-Cys132, Cys102-Cys112, Cys191-Cys276, Cys204-Cys286, Cys251-Cys261, Cys336-Cys400, Cys349-Cys410, Cys380-Cys390, Cys450-Cys515, Cys463-Cys528, Cys497-Cys507, Cys558-Cys564, Cys610-Cys658, Cys642-Cys648, Cys670-Cys680, and Cys717-Cys731. Asn198 carries an N-linked (GlcNAc...) asparagine glycan. The tract at residues 533 to 736 is lysyl-oxidase like; sequence PDLVMNAQLV…WLHNCHTGNS (204 aa). Residues His611, His613, and His615 each contribute to the Cu cation site. A glycan (N-linked (GlcNAc...) asparagine) is linked at Asn629. Positions 638–674 form a cross-link, lysine tyrosylquinone (Lys-Tyr); that stretch reads KASFCLEDTNCPTGLQRRYACANFGEQGVTVGCWDTY. Position 674 is a 2',4',5'-topaquinone (Tyr674).

The protein belongs to the lysyl oxidase family. Cu cation serves as cofactor. It depends on lysine tyrosylquinone residue as a cofactor. In terms of processing, the lysine tyrosylquinone cross-link (LTQ) is generated by condensation of the epsilon-amino group of a lysine with a topaquinone produced by oxidation of tyrosine. May be proteolytically cleaved by BMP1. In terms of tissue distribution, expressed in many tissues, the highest levels among the tissues studied being in the skeletal muscle, testis and pancreas. Expressed in cartilage.

Its subcellular location is the secreted. It localises to the extracellular space. The catalysed reaction is L-lysyl-[protein] + O2 + H2O = (S)-2-amino-6-oxohexanoyl-[protein] + H2O2 + NH4(+). Its activity is regulated as follows. Inhibited by beta-aminopropionitrile (BAPN). In terms of biological role, catalyzes the oxidative deamination of lysine and hydroxylysine residues in collagen and elastin, resulting in the formation of covalent cross-linkages, and the stabilization of collagen and elastin fibers. This Homo sapiens (Human) protein is Lysyl oxidase homolog 4 (LOXL4).